Consider the following 310-residue polypeptide: Ribosomal RNA small subunit methyltransferase H (310 aa).

S-adenosyl-L-methionine-binding positions include 32 to 34 (GGH), Asp-52, Phe-79, Asp-100, and Gln-107.

Belongs to the methyltransferase superfamily. RsmH family.

It is found in the cytoplasm. The enzyme catalyses cytidine(1402) in 16S rRNA + S-adenosyl-L-methionine = N(4)-methylcytidine(1402) in 16S rRNA + S-adenosyl-L-homocysteine + H(+). Functionally, specifically methylates the N4 position of cytidine in position 1402 (C1402) of 16S rRNA. The chain is Ribosomal RNA small subunit methyltransferase H from Bacillus thuringiensis subsp. konkukian (strain 97-27).